The sequence spans 61 residues: Small ribosomal subunit protein uS14 (61 aa).

Zn(2+) is bound by residues cysteine 24, cysteine 27, cysteine 40, and cysteine 43.

The protein belongs to the universal ribosomal protein uS14 family. Zinc-binding uS14 subfamily. As to quaternary structure, part of the 30S ribosomal subunit. Contacts proteins S3 and S10. The cofactor is Zn(2+).

Binds 16S rRNA, required for the assembly of 30S particles and may also be responsible for determining the conformation of the 16S rRNA at the A site. In Roseiflexus castenholzii (strain DSM 13941 / HLO8), this protein is Small ribosomal subunit protein uS14.